The chain runs to 381 residues: Prolargin (381 aa).

An N-terminal signal peptide occupies residues 1–21; the sequence is MRSSLCWLLTLLLILATAAQG. The segment at 19–65 is disordered; it reads AQGQPTRRPRPRPRPRPRPRLRPTPSFPQPDEPTEPTDLPPPLPPGP. A compositionally biased stretch (basic residues) spans 25–39; the sequence is RRPRPRPRPRPRPRL. Pro residues predominate over residues 56 to 65; the sequence is DLPPPLPPGP. 12 LRR repeats span residues 94 to 113, 114 to 137, 138 to 161, 162 to 182, 183 to 206, 207 to 232, 233 to 253, 254 to 277, 278 to 302, 303 to 322, 323 to 361, and 362 to 381; these read RKVP…NNFI, TELP…NNRI, RKVD…KNQL, EEVP…QNQI, SRIP…HNKL, SDGV…HNTL, RKMP…SNRI, EAIP…YNQL, SDRG…HNRI, SSVP…NNSI, EKIN…GNYL, and KPPI…SVVI. Asn123 carries N-linked (GlcNAc...) asparagine glycosylation. N-linked (GlcNAc...) asparagine glycosylation is found at Asn288, Asn319, and Asn326. A disulfide bond links Cys331 and Cys372.

The protein belongs to the small leucine-rich proteoglycan (SLRP) family. SLRP class II subfamily. In terms of assembly, binds the basement membrane heparan sulfate proteoglycan perlecan and triple helical collagens type I and type II. Post-translationally, glycosylated; contains heparan sulfate.

The protein resides in the secreted. It is found in the extracellular space. Its subcellular location is the extracellular matrix. In terms of biological role, may anchor basement membranes to the underlying connective tissue. In Bos taurus (Bovine), this protein is Prolargin (PRELP).